The chain runs to 211 residues: Thymidylate kinase (211 aa).

Residue 10 to 17 (GPDGAGKT) participates in ATP binding.

It belongs to the thymidylate kinase family.

The enzyme catalyses dTMP + ATP = dTDP + ADP. Its function is as follows. Phosphorylation of dTMP to form dTDP in both de novo and salvage pathways of dTTP synthesis. In Lactococcus lactis subsp. cremoris (strain SK11), this protein is Thymidylate kinase.